A 189-amino-acid polypeptide reads, in one-letter code: Small ribosomal subunit protein uS5 (189 aa).

The S5 DRBM domain occupies 22-85 (FVDKLVAINR…ESAKRDLIFV (64 aa)).

The protein belongs to the universal ribosomal protein uS5 family. In terms of assembly, part of the 30S ribosomal subunit. Contacts proteins S4 and S8.

In terms of biological role, with S4 and S12 plays an important role in translational accuracy. Functionally, located at the back of the 30S subunit body where it stabilizes the conformation of the head with respect to the body. The sequence is that of Small ribosomal subunit protein uS5 from Allorhizobium ampelinum (strain ATCC BAA-846 / DSM 112012 / S4) (Agrobacterium vitis (strain S4)).